A 273-amino-acid chain; its full sequence is Outer surface protein A (273 aa).

The N-terminal stretch at 1 to 16 is a signal peptide; that stretch reads MKKYLLGIGLILALIA. Cys17 carries N-palmitoyl cysteine lipidation. Cys17 carries the S-diacylglycerol cysteine lipid modification.

This sequence belongs to the OspA lipoprotein family.

It is found in the cell outer membrane. Its subcellular location is the cell surface. In Borreliella burgdorferi (Lyme disease spirochete), this protein is Outer surface protein A.